A 298-amino-acid polypeptide reads, in one-letter code: 3-hydroxyisobutyrate dehydrogenase (298 aa).

Residues 2–30 (TDIAFLGLGNMGGPMAANLLKAGHRVNVF), 65–66 (LP), and Thr-96 contribute to the NAD(+) site. Lys-171 is an active-site residue. Lys-246 contacts NAD(+).

It belongs to the HIBADH-related family.

It catalyses the reaction 3-hydroxy-2-methylpropanoate + NAD(+) = 2-methyl-3-oxopropanoate + NADH + H(+). Its pathway is amino-acid degradation; L-valine degradation. This Pseudomonas aeruginosa (strain ATCC 15692 / DSM 22644 / CIP 104116 / JCM 14847 / LMG 12228 / 1C / PRS 101 / PAO1) protein is 3-hydroxyisobutyrate dehydrogenase.